The following is a 260-amino-acid chain: Translation initiation factor 2 subunit alpha (260 aa).

Residues 12–83 (GDLIVGTVHK…KKGHVDASLK (72 aa)) form the S1 motif domain.

This sequence belongs to the eIF-2-alpha family. In terms of assembly, heterotrimer composed of an alpha, a beta and a gamma chain.

EIF-2 functions in the early steps of protein synthesis by forming a ternary complex with GTP and initiator tRNA. This is Translation initiation factor 2 subunit alpha from Methanosphaera stadtmanae (strain ATCC 43021 / DSM 3091 / JCM 11832 / MCB-3).